A 541-amino-acid polypeptide reads, in one-letter code: Chaperonin GroEL 2 (541 aa).

ATP contacts are provided by residues 29-32 (TLGP), 86-90 (DGTTT), G414, 478-480 (DAA), and D494.

The protein belongs to the chaperonin (HSP60) family. Forms a cylinder of 14 subunits composed of two heptameric rings stacked back-to-back. Interacts with the co-chaperonin GroES.

Its subcellular location is the cytoplasm. It carries out the reaction ATP + H2O + a folded polypeptide = ADP + phosphate + an unfolded polypeptide.. Together with its co-chaperonin GroES, plays an essential role in assisting protein folding. The GroEL-GroES system forms a nano-cage that allows encapsulation of the non-native substrate proteins and provides a physical environment optimized to promote and accelerate protein folding. In Frankia casuarinae (strain DSM 45818 / CECT 9043 / HFP020203 / CcI3), this protein is Chaperonin GroEL 2.